The primary structure comprises 230 residues: ATP synthase subunit a (230 aa).

5 helical membrane-spanning segments follow: residues 17–37, 78–98, 107–127, 165–187, and 198–218; these read LPITQSVLTTWFIMISLFIMA, IFPFVATLWIFILVSNLIGVI, DLSVTASLAIMTFLSVHWFGI, LFGNIMSLQLTALIVLMIAGFLV, and EAIIQAYIFGMLALIYIAGGI.

The protein belongs to the ATPase A chain family. In terms of assembly, F-type ATPases have 2 components, CF(1) - the catalytic core - and CF(0) - the membrane proton channel. CF(1) has five subunits: alpha(3), beta(3), gamma(1), delta(1), epsilon(1). CF(0) has three main subunits: a(1), b(2) and c(9-12). The alpha and beta chains form an alternating ring which encloses part of the gamma chain. CF(1) is attached to CF(0) by a central stalk formed by the gamma and epsilon chains, while a peripheral stalk is formed by the delta and b chains.

The protein resides in the cell inner membrane. In terms of biological role, key component of the proton channel; it plays a direct role in the translocation of protons across the membrane. This Legionella pneumophila subsp. pneumophila (strain Philadelphia 1 / ATCC 33152 / DSM 7513) protein is ATP synthase subunit a.